A 91-amino-acid polypeptide reads, in one-letter code: CRISPR-associated endoribonuclease Cas2 2 (91 aa).

Asp-8 serves as a coordination point for Mg(2+).

It belongs to the CRISPR-associated endoribonuclease Cas2 protein family. In terms of assembly, homodimer, forms a heterotetramer with a Cas1 homodimer. It depends on Mg(2+) as a cofactor.

CRISPR (clustered regularly interspaced short palindromic repeat), is an adaptive immune system that provides protection against mobile genetic elements (viruses, transposable elements and conjugative plasmids). CRISPR clusters contain sequences complementary to antecedent mobile elements and target invading nucleic acids. CRISPR clusters are transcribed and processed into CRISPR RNA (crRNA). Functions as a ssRNA-specific endoribonuclease. Involved in the integration of spacer DNA into the CRISPR cassette. The protein is CRISPR-associated endoribonuclease Cas2 2 of Pyrobaculum aerophilum (strain ATCC 51768 / DSM 7523 / JCM 9630 / CIP 104966 / NBRC 100827 / IM2).